Reading from the N-terminus, the 423-residue chain is MKAELIAVGTEILTGQIVNTNAQFLSEKMAELGIDVYFQTAVGDNEERLLSVIDIASQRSDLVILCGGLGPTDDDLTKQTLAKYLGKALVFDEQAGQKLDAFFAHRKQTARTPNNQRQAQLIEGSVALQNQTGLAVGGLITVDGVTYVVLPGPPSELKPMVKNELVPLLSASHASLYSRVLRFFGIGESQLVTALEDLIKYQTDPTIAPYAKTGEVTLRLSTKADHQALANERLDQLELQLLSIRTIDNQPLRRLLYGYGEDNSLARETFELLKRSGKTITAAESLTAGLFQAQLTDFAGASQVFNGGFITYSIEEKARMLGIPLVELQRHGVVSSFTAEQMAAQARCLTDSDIGIGLTGVAGPEELEEQPAGTVFIGLATKNKVESLKVVIGGRSRLDVRYIATLYAFNMVRKALLKSENLL.

The protein belongs to the CinA family.

This Streptococcus equi subsp. zooepidemicus (strain H70) protein is Putative competence-damage inducible protein.